Here is an 824-residue protein sequence, read N- to C-terminus: Ent-copalyl diphosphate synthase AN1, chloroplastic (824 aa).

The N-terminal 63 residues, 1-63 (MPYPHPYPWQ…SSAKVFQTSR (63 aa)), are a transit peptide targeting the chloroplast. Positions 1-87 (MPYPHPYPWQ…QDLEDEHQAE (87 aa)) are disordered. Residues 44–63 (ATTTQQPDNVSSAKVFQTSR) are compositionally biased toward polar residues. Lys-247 lines the substrate pocket. Mg(2+) contacts are provided by Asp-379 and Asp-381. The DXDD motif signature appears at 379 to 382 (DVDD). Lys-465 lines the substrate pocket.

It belongs to the terpene synthase family. Tpsc subfamily. Mg(2+) is required as a cofactor.

It localises to the plastid. Its subcellular location is the chloroplast. It catalyses the reaction (2E,6E,10E)-geranylgeranyl diphosphate = ent-copalyl diphosphate. It participates in plant hormone biosynthesis; gibberellin biosynthesis. Involved in giberellin biosynthesis. Catalyzes the conversion of geranylgeranyl diphosphate to the gibberellin precursor ent-copalyl diphosphate. This is Ent-copalyl diphosphate synthase AN1, chloroplastic from Zea mays (Maize).